Reading from the N-terminus, the 309-residue chain is Protein MAK16 homolog (309 aa).

The interval 194-309 is disordered; it reads EADQFSEEEA…IEEETENQAN (116 aa). 2 stretches are compositionally biased toward acidic residues: residues 195-227 and 235-270; these read ADQF…DIED and VEGD…DDEE. Residues 275-293 show a composition bias toward basic residues; sequence ITKKRGPTFKPTKKTPQKR. A compositionally biased stretch (acidic residues) spans 299-309; the sequence is EIEEETENQAN.

It belongs to the MAK16 family.

The protein resides in the nucleus. The protein localises to the nucleolus. The chain is Protein MAK16 homolog (mak16l) from Dictyostelium discoideum (Social amoeba).